The sequence spans 257 residues: Imidazole glycerol phosphate synthase subunit HisF (257 aa).

Catalysis depends on residues Asp11 and Asp130.

Belongs to the HisA/HisF family. As to quaternary structure, heterodimer of HisH and HisF.

It is found in the cytoplasm. The enzyme catalyses 5-[(5-phospho-1-deoxy-D-ribulos-1-ylimino)methylamino]-1-(5-phospho-beta-D-ribosyl)imidazole-4-carboxamide + L-glutamine = D-erythro-1-(imidazol-4-yl)glycerol 3-phosphate + 5-amino-1-(5-phospho-beta-D-ribosyl)imidazole-4-carboxamide + L-glutamate + H(+). Its pathway is amino-acid biosynthesis; L-histidine biosynthesis; L-histidine from 5-phospho-alpha-D-ribose 1-diphosphate: step 5/9. IGPS catalyzes the conversion of PRFAR and glutamine to IGP, AICAR and glutamate. The HisF subunit catalyzes the cyclization activity that produces IGP and AICAR from PRFAR using the ammonia provided by the HisH subunit. This chain is Imidazole glycerol phosphate synthase subunit HisF, found in Shewanella sp. (strain ANA-3).